The following is a 363-amino-acid chain: MVQEDDENLRNSMSLRPTSLSTRPTSLSVNGNEKTLPEESVLRSLSTGTLKYPDDEHLYTFSSANLQDLGAIGNGNFGTVYKMRHKETGKLIAVKRIRCNNIGHREQIRLLREHDTIVKSEKGPNIVKFYGAIFSEGDCWICMELMDISMDLLYKRVYMVKNSRLNENVVGHITVCTVDALDYLKKELKIIHRDVKPSNILVDGTGAVKLCDFGICGQLEESFAKTHDAGCQPYLAPERITSSDKYDVRSDVWSLGITLYEIATGKFPYQEWNSLFDQIATVVSGDPPILHPDSDDFHYSLPLVKFINTCLTKDRRHRPKYDTLKSFDFYRIYAVAGPEIEEAKRILGVEAIDTRNHPVDHRG.

The segment at 1 to 38 is disordered; the sequence is MVQEDDENLRNSMSLRPTSLSTRPTSLSVNGNEKTLPE. Low complexity predominate over residues 14-28; that stretch reads SLRPTSLSTRPTSLS. The Protein kinase domain occupies 66-330; sequence LQDLGAIGNG…YDTLKSFDFY (265 aa). Residues 72-80 and lysine 95 contribute to the ATP site; that span reads IGNGNFGTV. Residue aspartate 194 is the Proton acceptor of the active site.

This sequence belongs to the protein kinase superfamily. STE Ser/Thr protein kinase family. MAP kinase kinase subfamily. Expressed in the pharynx, including the corpus, isthmus and terminal bulb.

The protein localises to the cytoplasm. It carries out the reaction L-seryl-[protein] + ATP = O-phospho-L-seryl-[protein] + ADP + H(+). It catalyses the reaction L-threonyl-[protein] + ATP = O-phospho-L-threonyl-[protein] + ADP + H(+). The enzyme catalyses L-tyrosyl-[protein] + ATP = O-phospho-L-tyrosyl-[protein] + ADP + H(+). Its function is as follows. Activity is required in presynaptic neurons, in a dose-dependent manner, for normal presynaptic development and morphology. Plays a role in the formation of muscle connections, also called muscle arm extensions, between the body wall and the motor axons in the dorsal and ventral cord. This is MAP kinase kinase mkk-4 (mkk-4) from Caenorhabditis elegans.